The chain runs to 283 residues: S-adenosylmethionine mitochondrial carrier protein homolog (283 aa).

3 Solcar repeats span residues 11 to 84 (LKFF…GKQF), 93 to 178 (DSPY…FKLQ), and 187 to 275 (STPF…TTRI). 6 consecutive transmembrane segments (helical) span residues 14–34 (FHAL…LFPI), 55–75 (GIYK…ALFF), 99–119 (MAAA…VEIA), 152–172 (RGFG…FPLW), 190–210 (FSVA…TTPL), and 248–268 (FAGF…FFGF).

It belongs to the mitochondrial carrier (TC 2.A.29) family.

The protein resides in the mitochondrion inner membrane. Functionally, mitochondrial solute carriers shuttle metabolites, nucleotides, and cofactors through the mitochondrial inner membrane. May mediate the transport of S-adenosylmethionine (SAM) into the mitochondria. In Drosophila melanogaster (Fruit fly), this protein is S-adenosylmethionine mitochondrial carrier protein homolog.